We begin with the raw amino-acid sequence, 185 residues long: ATP-dependent protease subunit HslV (185 aa).

Threonine 6 is a catalytic residue. Residues glycine 162, cysteine 165, and threonine 168 each contribute to the Na(+) site.

The protein belongs to the peptidase T1B family. HslV subfamily. As to quaternary structure, a double ring-shaped homohexamer of HslV is capped on each side by a ring-shaped HslU homohexamer. The assembly of the HslU/HslV complex is dependent on binding of ATP.

The protein localises to the cytoplasm. The catalysed reaction is ATP-dependent cleavage of peptide bonds with broad specificity.. With respect to regulation, allosterically activated by HslU binding. In terms of biological role, protease subunit of a proteasome-like degradation complex believed to be a general protein degrading machinery. This is ATP-dependent protease subunit HslV from Nitratidesulfovibrio vulgaris (strain DSM 19637 / Miyazaki F) (Desulfovibrio vulgaris).